A 517-amino-acid polypeptide reads, in one-letter code: MTKNIHDQRILILDFGSQYTQLVARRVREIGVYCELWSWDVEEADIREFNPDGIILSGGPESVTEDNSPRAPQYVFDSGVPVLGVCYGMQTMAEQLGGKVSTSDEREFGYAAVKVSGESAIFKDLEATQDVWMSHGDKVVEIPAGFTKVGETDTCPYAAMANEEKKYYGVQFHPEVTHTKNGLQMLENFVLGICGCERLWTSESIIEDAVARIKEQVGDDEVILGLSGGVDSSVVAMLVHRAIGDKLTCVFVDNGLLRLNEGQQVMDMFGDKFGLNIIKVDAEERFLKALEGKSDPEEKRKTIGHVFVDVFDEESKKLKNAKWLAQGTIYPDVIESAASKTGKAHVIKSHHNVGGLPDDMEMGLVEPLRELFKDEVRKIGLELGLPYEMLYRHPFPGPGLGVRVLGEIKKEYCDLLRRADAIFIEELHAADLYNKVSQAFTVFLPVRSVGVMGDGRKYDWVVSLRAVETIDFMTAHWAHLPYDFLGKVSNRIINEVNGISRVVYDISGKPPATIEWE.

Positions 9–199 constitute a Glutamine amidotransferase type-1 domain; that stretch reads RILILDFGSQ…VLGICGCERL (191 aa). Residue C86 is the Nucleophile of the active site. Residues H173 and E175 contribute to the active site. A GMPS ATP-PPase domain is found at 200–392; it reads WTSESIIEDA…LGLPYEMLYR (193 aa). Residue 227–233 participates in ATP binding; it reads SGGVDSS.

Homodimer.

The catalysed reaction is XMP + L-glutamine + ATP + H2O = GMP + L-glutamate + AMP + diphosphate + 2 H(+). It functions in the pathway purine metabolism; GMP biosynthesis; GMP from XMP (L-Gln route): step 1/1. Its function is as follows. Catalyzes the synthesis of GMP from XMP. This Vibrio vulnificus (strain CMCP6) protein is GMP synthase [glutamine-hydrolyzing].